A 441-amino-acid polypeptide reads, in one-letter code: Protein kinase C and casein kinase substrate in neurons protein 1 (441 aa).

Residues serine 2 and serine 76 each carry the phosphoserine modification. Residues 10–280 (EEITDSFWEV…AIRGADAQED (271 aa)) enclose the F-BAR domain. Residues 23–272 (KRTVKRIDDG…HVYRELEQAI (250 aa)) are a coiled coil. Phosphothreonine is present on threonine 181. The disordered stretch occupies residues 310 to 380 (AAKKEKQPKK…ANGGANPFED (71 aa)). A compositionally biased stretch (basic and acidic residues) spans 311 to 321 (AKKEKQPKKAE). Polar residues predominate over residues 326 to 348 (SNATGAVESTSQAGDRGSVSSYD). Phosphoserine is present on residues serine 343, serine 345, serine 346, serine 358, and serine 362. The 60-residue stretch at 382-441 (AKGVRVRALYDYDGQEQDELSFKAGDELTKLGEEDEQGWCRGRLDSGQLGLYPANYVEAI) folds into the SH3 domain. Tyrosine 391 is subject to Phosphotyrosine. Phosphoserine is present on residues serine 402 and serine 427.

The protein belongs to the PACSIN family. In terms of assembly, homodimer. May form heterooligomers with other PACSINs. Interacts with MAPT. Interacts with TRPV4. Interacts (via SH3 domain) with SYNJ1 and WASL. Interacts (via SH3 domain) with DNM1; the interaction is reduced by DNM1 phosphorylation. Interacts with DNM2 and DNM3. Interacts with both COBL and DBNL. Identified in a complex composed of COBL, PACSIN1 and WASL. Interacts with EHD1 and EHD3. Post-translationally, phosphorylated by casein kinase 2 (CK2) and protein kinase C (PKC). As to expression, highly expressed in brain (at protein level).

It localises to the cytoplasm. The protein localises to the cell projection. The protein resides in the synapse. It is found in the synaptosome. Its subcellular location is the ruffle membrane. It localises to the membrane. The protein localises to the cytoplasmic vesicle membrane. The protein resides in the cytosol. It is found in the cell membrane. Binds to membranes via its F-BAR domain and mediates membrane tubulation. Plays a role in the reorganization of the microtubule cytoskeleton via its interaction with MAPT; this decreases microtubule stability and inhibits MAPT-induced microtubule polymerization. Plays a role in cellular transport processes by recruiting DNM1, DNM2 and DNM3 to membranes. Plays a role in the reorganization of the actin cytoskeleton and in neuron morphogenesis via its interaction with COBL and WASL, and by recruiting COBL to the cell cortex. Plays a role in the regulation of neurite formation, neurite branching and the regulation of neurite length. Required for normal synaptic vesicle endocytosis; this process retrieves previously released neurotransmitters to accommodate multiple cycles of neurotransmission. Required for normal excitatory and inhibitory synaptic transmission. The chain is Protein kinase C and casein kinase substrate in neurons protein 1 (Pacsin1) from Rattus norvegicus (Rat).